The sequence spans 132 residues: UPF0329 protein ECU07_0050/ECU09_2020 (132 aa).

The protein belongs to the UPF0329 family.

The protein is UPF0329 protein ECU07_0050/ECU09_2020 of Encephalitozoon cuniculi (strain GB-M1) (Microsporidian parasite).